Consider the following 261-residue polypeptide: Probable septum site-determining protein MinC (261 aa).

Residues 106-145 (RAPAAKPADEAEPAAVPAVETAAAPAAAAAPEQPSEPAPT) form a disordered region. Low complexity predominate over residues 118-144 (PAAVPAVETAAAPAAAAAPEQPSEPAP).

Belongs to the MinC family. As to quaternary structure, interacts with MinD and FtsZ.

In terms of biological role, cell division inhibitor that blocks the formation of polar Z ring septums. Rapidly oscillates between the poles of the cell to destabilize FtsZ filaments that have formed before they mature into polar Z rings. Prevents FtsZ polymerization. This is Probable septum site-determining protein MinC from Burkholderia orbicola (strain AU 1054).